The primary structure comprises 262 residues: Dihydroorotate dehydrogenase B (NAD(+)), electron transfer subunit (262 aa).

The FAD-binding FR-type domain occupies Lys3–Val104. FAD-binding positions include Arg53–Ser56, Leu70–Arg72, and Gly79–Thr80. [2Fe-2S] cluster-binding residues include Cys226, Cys231, Cys234, and Cys249.

This sequence belongs to the PyrK family. In terms of assembly, heterotetramer of 2 PyrK and 2 PyrD type B subunits. [2Fe-2S] cluster serves as cofactor. It depends on FAD as a cofactor.

It functions in the pathway pyrimidine metabolism; UMP biosynthesis via de novo pathway; orotate from (S)-dihydroorotate (NAD(+) route): step 1/1. Functionally, responsible for channeling the electrons from the oxidation of dihydroorotate from the FMN redox center in the PyrD type B subunit to the ultimate electron acceptor NAD(+). The chain is Dihydroorotate dehydrogenase B (NAD(+)), electron transfer subunit from Lactococcus lactis subsp. lactis (strain IL1403) (Streptococcus lactis).